The primary structure comprises 298 residues: 1,2-dihydroxynaphthalene dioxygenase (298 aa).

VOC domains lie at 6–121 (ELGY…IFYG) and 146–267 (GIGH…FGWG). Position 149 (H149) interacts with Fe cation. Residues H149, 196–197 (QH), H212, and Y253 contribute to the substrate site. H212 is a binding site for Fe cation. E263 lines the Fe cation pocket.

This sequence belongs to the extradiol ring-cleavage dioxygenase family. In terms of assembly, homooctamer. Fe(2+) serves as cofactor.

The catalysed reaction is naphthalene-1,2-diol + O2 = 2-hydroxychromene-2-carboxylate + H(+). It participates in aromatic compound metabolism; naphthalene degradation. Its function is as follows. Involved in the naphthalene and naphthalenesulfonate catabolic pathway. Catalyzes the meta-cleavage of 1,2-dihydroxynaphthalene (1,2-DHN) to yield 2-hydroxychromene-2-carboxylic acid. Can also cleave 1,2,5-trihydroxynaphthalene (1,2,5-THN), 1,2,6-trihydroxynaphthalene (1,2,6-THN), 1,2,7-trihydroxynaphthalene (1,2,7-THN), 2,3-dihydroxybiphenyl, 3,4-dihydroxybiphenyl, catechol, 3-methylcatechol and 4-methylcatechol. This is 1,2-dihydroxynaphthalene dioxygenase (nsaC) from Sphingobium xenophagum.